We begin with the raw amino-acid sequence, 217 residues long: Eukaryotic translation initiation factor 4E (217 aa).

Residues 1-27 (MATVEPETTPTPNPPPAEEEKTESNQE) form a disordered region. Position 2 is an N-acetylalanine (Ala2). At Thr22 the chain carries Phosphothreonine. The segment at 37-40 (HPLQ) is EIF4EBP1/2/3 binding. Position 56–57 (56–57 (WQ)) interacts with mRNA. The tract at residues 73–77 (WALYN) is EIF4EBP1/2/3 binding. Residue 102-103 (WE) participates in mRNA binding. Residues 132 to 139 (ETLLCLIG) form an EIF4EBP1/2/3 binding region. MRNA is bound by residues 157–162 (RAKGDK) and 205–207 (TKS). At Ser209 the chain carries Phosphoserine; by PKC and MKNK2.

Belongs to the eukaryotic initiation factor 4E family. As to quaternary structure, eIF4F is a multi-subunit complex, the composition of which varies with external and internal environmental conditions. It is composed of at least EIF4A, EIF4E and EIF4G1/EIF4G3. EIF4E is also known to interact with other partners. Interacts with EIF4ENIF1/4E-T; promotes recruitment to P-bodies and import into the nucleus. Hypophosphorylated EIF4EBP1, EIF4EBP2 and EIF4EBP3 compete with EIF4G1/EIF4G3 to interact with EIF4E; insulin stimulated MAP-kinase (MAPK1 and MAPK3) phosphorylation of EIF4EBP1 causes dissociation of the complex allowing EIF4G1/EIF4G3 to bind and consequent initiation of translation. Interacts mutually exclusive with EIF4A1 or EIF4A2. Interacts with NGDN and PIWIL2. Component of the CYFIP1-EIF4E-FMR1 complex composed of CYFIP, EIF4E and FMR1. Interacts directly with CYFIP1. Interacts with CLOCK. Binds to MKNK2 in nucleus. Interacts with LIMD1, WTIP and AJUBA. Interacts with APOBEC3G in an RNA-dependent manner. Interacts with LARP1. Interacts with METTL3. Interacts with RBM24; this interaction prevents EIF4E from binding to p53/TP53 mRNA and inhibits the assembly of translation initiation complex. Interacts with DDX3X; interaction is direct and in an RNA-independent manner; this interaction enhances EIF4E cap-binding ability and is required for the repression of cap-dependent translation and the increase of IRES-mediated translation. DDX3X competes with EIF4G1 for interaction with EIF4E. Interacts with EIF4G1; which in a mutual exclusive interaction associates either with EIF1 or with EIF4E on a common binding site. Interacts with BTG4 and CNOT7. Interacts with LRPPRC (via N-terminus); the interaction promotes association of EIF4E with 4ESE-containing mRNAs. Interacts with mRNA cleavage enzyme CPSF3 and its cofactor CPSF1. Interacts (via RING-type zinc finger) with PML; the interaction results in conformational changes of both interacting proteins and reduces EIF4E affinity for the 5' m7G cap of mRNA, thus reducing EIF4E-mediated mRNA nuclear export. Interacts with homeobox protein HHEX/PRH; the interaction inhibits EIF4E-mediated mRNA nuclear export. Interacts with homeobox protein HOXA9; the interaction positively regulates EIF4E-mediated mRNA nuclear export. Interacts with homeobox protein EMX2. Post-translationally, phosphorylation increases the ability of the protein to bind to mRNA caps and to form the eIF4F complex. Phosphorylation also enhances its mRNA transport function. Phosphorylation at Ser-209 is not essential for protein synthesis.

Its subcellular location is the cytoplasm. The protein localises to the P-body. The protein resides in the stress granule. It is found in the nucleus. It localises to the nucleus speckle. Its subcellular location is the nuclear body. Its function is as follows. Acts in the cytoplasm to initiate and regulate protein synthesis and is required in the nucleus for export of a subset of mRNAs from the nucleus to the cytoplasm which promotes processes such as RNA capping, processing and splicing. Component of the protein complex eIF4F, which is involved in the recognition of the mRNA cap, ATP-dependent unwinding of 5'-terminal secondary structure and recruitment of mRNA to the ribosome. This protein recognizes and binds the 7-methylguanosine (m7G)-containing mRNA cap during an early step in the initiation of protein synthesis and facilitates ribosome binding by inducing the unwinding of the mRNAs secondary structures. Together with EIF4G1, antagonizes the scanning promoted by EIF1-EIF4G1 and is required for TISU translation, a process where the TISU element recognition makes scanning unnecessary. In addition to its role in translation initiation, also acts as a regulator of translation and stability in the cytoplasm. Component of the CYFIP1-EIF4E-FMR1 complex which binds to the mRNA cap and mediates translational repression: in the complex, EIF4E mediates the binding to the mRNA cap. Component of a multiprotein complex that sequesters and represses translation of proneurogenic factors during neurogenesis. In P-bodies, component of a complex that mediates the storage of translationally inactive mRNAs in the cytoplasm and prevents their degradation. May play an important role in spermatogenesis through translational regulation of stage-specific mRNAs during germ cell development. As well as its roles in translation, also involved in mRNA nucleocytoplasmic transport. Its role in mRNA export from the nucleus to the cytoplasm relies on its ability to bind the m7G cap of RNAs and on the presence of the 50-nucleotide EIF4E sensitivity element (4ESE) in the 3'UTR of sensitive transcripts. Interaction with the 4ESE is mediated by LRPPRC which binds simultaneously to both EIF4E and the 4ESE, thereby acting as a platform for assembly for the RNA export complex. EIF4E-dependent mRNA export is independent of ongoing protein or RNA synthesis and is also NFX1-independent but is XPO1-dependent with LRPPRC interacting with XPO1 to form an EIF4E-dependent mRNA export complex. Alters the composition of the cytoplasmic face of the nuclear pore to promote RNA export by reducing RANBP2 expression, relocalizing nucleoporin NUP214 and increasing expression of RANBP1 and RNA export factors DDX19 and GLE1. Promotes the nuclear export of cyclin CCND1 mRNA. Promotes the nuclear export of NOS2/iNOS mRNA. Promotes the nuclear export of MDM2 mRNA. Also promotes the export of additional mRNAs, including others involved in the cell cycle. In the nucleus, binds to capped splice factor-encoding mRNAs and stimulates their nuclear export to enhance splice factor production by increasing their cytoplasmic availability to the translation machinery. May also regulate splicing through interaction with the spliceosome in an RNA and m7G cap-dependent manner. Also binds to some pre-mRNAs and may play a role in their recruitment to the spliceosome. Promotes steady-state capping of a subset of coding and non-coding RNAs by mediating nuclear export of capping machinery mRNAs including RNMT, RNGTT and RAMAC to enhance their translation. Stimulates mRNA 3'-end processing by promoting the expression of several core cleavage complex factors required for mRNA cleavage and polyadenylation, and may also have a direct effect through its interaction with the CPSF3 cleavage enzyme. Rescues cells from apoptosis by promoting activation of serine/threonine-protein kinase AKT1 through mRNA export of NBS1 which potentiates AKT1 phosphorylation and also through mRNA export of AKT1 effectors, allowing for increased production of these proteins. This Oryctolagus cuniculus (Rabbit) protein is Eukaryotic translation initiation factor 4E (EIF4E).